The sequence spans 243 residues: 2-C-methyl-D-erythritol 4-phosphate cytidylyltransferase (243 aa).

It belongs to the IspD/TarI cytidylyltransferase family. IspD subfamily.

The catalysed reaction is 2-C-methyl-D-erythritol 4-phosphate + CTP + H(+) = 4-CDP-2-C-methyl-D-erythritol + diphosphate. Its pathway is isoprenoid biosynthesis; isopentenyl diphosphate biosynthesis via DXP pathway; isopentenyl diphosphate from 1-deoxy-D-xylulose 5-phosphate: step 2/6. Its function is as follows. Catalyzes the formation of 4-diphosphocytidyl-2-C-methyl-D-erythritol from CTP and 2-C-methyl-D-erythritol 4-phosphate (MEP). In Chlorobium phaeovibrioides (strain DSM 265 / 1930) (Prosthecochloris vibrioformis (strain DSM 265)), this protein is 2-C-methyl-D-erythritol 4-phosphate cytidylyltransferase.